Reading from the N-terminus, the 447-residue chain is MAGAGGGNDIQWCFSQVKGAVDDDVAEADIISTVEFNHSGELLATGDKGGRVVIFQQEQENKIQSHSRGEYNVYSTFQSHEPEFDYLKSLEIEEKINKIRWLPQKNAAQFLLSTNDKTIKLWKISERDKRPEGYNLKEEDGRYRDPTTVTTLRVPVFRPMDLMVEASPRRIFANAHTYHINSISINSDYETYLSADDLRINLWHLEITDRSFNIVDIKPANMEELTEVITAAEFHPNSCNTFVYSSSKGTIRLCDMRASALCDRHSKLFEEPEDPSNRSFFSEIISSISDVKFSHSGRYMMTRDYLSVKIWDLNMENRPVETYQVHEYLRSKLCSLYENDCIFDKFECCWNGSDSVVMTGSYNNFFRMFDRNTKRDITLEASRENNKPRTVLKPRKVCASGKRKKDEISVDSLDFNKKILHTAWHPKENIIAVATTNNLYIFQDKVN.

Ala2 carries the N-acetylalanine modification. WD repeat units follow at residues 11 to 80, 94 to 174, 175 to 218, 227 to 270, 288 to 325, 347 to 381, and 414 to 446; these read QWCF…FQSH, EKIN…IFAN, AHTY…VDIK, EVIT…KLFE, ISDV…TYQV, ECCW…TLEA, and DFNK…QDKV.

Belongs to the phosphatase 2A regulatory subunit B family. PP2A consists of a common heterodimeric core enzyme, composed of a 36 kDa catalytic subunit (subunit C) and a 65 kDa constant regulatory subunit (PR65 or subunit A), that associates with a variety of regulatory subunits. Proteins that associate with the core dimer include three families of regulatory subunits B (the R2/B/PR55/B55, R3/B''/PR72/PR130/PR59 and R5/B'/B56 families), the 48 kDa variable regulatory subunit, viral proteins, and cell signaling molecules. Interacts with the PP2A C catalytic subunit PPP2CA. Interacts with the PP2A A subunit PPP2R1A. Interacts with TP53. Interacts with IER5. Interacts with MFHAS1; the interaction is direct. Interacts with PABIR1/FAM122A (via its N-terminus); the interaction is direct and inhibits PP2A activity. Interacts with ARPP19; the interaction is direct and inhibits PP2A activity. Interacts with CRTC3. Expressed in all tissues examined.

Functionally, substrate-recognition subunit of protein phosphatase 2A (PP2A) that plays a key role in cell cycle by controlling mitosis entry and exit. Involved in chromosome clustering during late mitosis by mediating dephosphorylation of MKI67. Essential for serine/threonine-protein phosphatase 2A-mediated dephosphorylation of WEE1, preventing its ubiquitin-mediated proteolysis, increasing WEE1 protein levels, and promoting the G2/M checkpoint. The sequence is that of Serine/threonine-protein phosphatase 2A 55 kDa regulatory subunit B alpha isoform (PPP2R2A) from Homo sapiens (Human).